A 113-amino-acid polypeptide reads, in one-letter code: Dolichyl-diphosphooligosaccharide--protein glycosyltransferase subunit DAD1 (113 aa).

At Ser2 the chain carries N-acetylserine. Residues 2-30 are Cytoplasmic-facing; the sequence is SASVLSVISRFLEEYLSATPQRLKLLDAY. The chain crosses the membrane as a helical span at residues 31–51; sequence LLYILLTGALQFGYCLLVGTF. Position 52 (Pro52) is a topological domain, lumenal. A helical membrane pass occupies residues 53–73; sequence FNSFLSGFISCVGSFILAVCL. Residues 74–92 are Cytoplasmic-facing; the sequence is RIQINPQNKADFQGISPER. Residues 93–113 traverse the membrane as a helical segment; that stretch reads AFADFLFASTILHLVVMNFVG.

It belongs to the DAD/OST2 family. As to quaternary structure, component of the oligosaccharyltransferase (OST) complex. OST exists in two different complex forms which contain common core subunits RPN1, RPN2, OST48, OST4, DAD1 and TMEM258, either STT3A or STT3B as catalytic subunits, and form-specific accessory subunits. STT3A complex assembly occurs through the formation of 3 subcomplexes. Subcomplex 1 contains RPN1 and TMEM258, subcomplex 2 contains the STT3A-specific subunits STT3A, DC2/OSTC, and KCP2 as well as the core subunit OST4, and subcomplex 3 contains RPN2, DAD1, and OST48. The STT3A complex can form stable complexes with the Sec61 complex or with both the Sec61 and TRAP complexes.

It localises to the endoplasmic reticulum membrane. It functions in the pathway protein modification; protein glycosylation. Functionally, subunit of the oligosaccharyl transferase (OST) complex that catalyzes the initial transfer of a defined glycan (Glc(3)Man(9)GlcNAc(2) in eukaryotes) from the lipid carrier dolichol-pyrophosphate to an asparagine residue within an Asn-X-Ser/Thr consensus motif in nascent polypeptide chains, the first step in protein N-glycosylation. N-glycosylation occurs cotranslationally and the complex associates with the Sec61 complex at the channel-forming translocon complex that mediates protein translocation across the endoplasmic reticulum (ER). All subunits are required for a maximal enzyme activity. This is Dolichyl-diphosphooligosaccharide--protein glycosyltransferase subunit DAD1 from Bos taurus (Bovine).